A 483-amino-acid polypeptide reads, in one-letter code: Regulatory protein ViaA (483 aa).

The protein belongs to the ViaA family. As to quaternary structure, homodimer. Interacts with RavA.

It is found in the cytoplasm. Its function is as follows. Component of the RavA-ViaA chaperone complex, which may act on the membrane to optimize the function of some of the respiratory chains. ViaA stimulates the ATPase activity of RavA. This Shigella flexneri protein is Regulatory protein ViaA.